The sequence spans 1054 residues: Filament-like plant protein 6 (1054 aa).

Coiled-coil stretches lie at residues 64-139 (VQIK…VKQH), 174-200 (AEDRAAHLDGALKECMRQIRNLKKDHE), and 250-341 (SNML…RKKL). 2 disordered regions span residues 359–390 (RDSGDARQKRSPVKVSSPCKSPGGYSSTGSEF) and 448–506 (EAQL…KEKD). Composition is skewed to low complexity over residues 371–380 (VKVSSPCKSP), 450–461 (QLQQNNSQKSSL), and 470–494 (SNPSSSISVSEDGNDDSGSCSGSLS). The stretch at 389 to 463 (EFSLDNAQKF…NNSQKSSLEV (75 aa)) forms a coiled coil. Coiled coils occupy residues 637-666 (QNLVEDCHLAEQKLQSIHQDLKNAVSRIHD) and 788-944 (ESDS…IFVL). Residues 951–1054 (FRPQPEQMRS…SRFFSSKSGY (104 aa)) are disordered. Over residues 1007 to 1032 (PSDSETSDTTTSPSRVGSRLSRSGSS) the composition is skewed to low complexity.

This sequence belongs to the FPP family. Interacts with WPP/MAF proteins.

The polypeptide is Filament-like plant protein 6 (FPP6) (Arabidopsis thaliana (Mouse-ear cress)).